The sequence spans 153 residues: Coiled-coil-helix-coiled-coil-helix domain-containing protein 2 (153 aa).

2 disordered regions span residues 1–51 and 78–106; these read MPRG…AAPR and HAITGGFSGGGSAEPAKPDITYQEPQGAQ. Residues 14 to 51 show a composition bias toward low complexity; the sequence is PPASRAPQMRAAPRRAPAAQPPAAAAPSAVGSPAAAPR. A CHCH domain is found at 113 to 153; sequence FGPCSLEIKQFLECAQNQSDVKLCEGFNEVLRQCRIANGLM. Short sequence motifs (cx9C motif) lie at residues 116–126 and 136–146; these read CSLEIKQFLEC and CEGFNEVLRQC. 2 disulfides stabilise this stretch: Cys116-Cys146 and Cys126-Cys136.

Interacts with RBPJ.

It localises to the nucleus. The protein resides in the mitochondrion. Its subcellular location is the mitochondrion intermembrane space. In terms of biological role, transcription factor. Binds to the oxygen responsive element of COX4I2 and activates its transcription under hypoxia conditions (4% oxygen), as well as normoxia conditions (20% oxygen). The protein is Coiled-coil-helix-coiled-coil-helix domain-containing protein 2 (Chchd2) of Mus musculus (Mouse).